A 156-amino-acid chain; its full sequence is Snaclec A1 (156 aa).

Positions methionine 1–alanine 23 are cleaved as a signal peptide. 3 cysteine pairs are disulfide-bonded: cysteine 27–cysteine 38, cysteine 55–cysteine 154, and cysteine 129–cysteine 146. The 122-residue stretch at histidine 34–glutamate 155 folds into the C-type lectin domain.

This sequence belongs to the snaclec family. In terms of assembly, heterodimer; disulfide-linked. In terms of tissue distribution, expressed by the venom gland.

The protein localises to the secreted. In terms of biological role, interferes with one step of hemostasis (modulation of platelet aggregation, or coagulation cascade, for example). In Macrovipera lebetinus (Levantine viper), this protein is Snaclec A1.